The following is a 149-amino-acid chain: Urease accessory protein UreE (149 aa).

The protein belongs to the UreE family.

The protein localises to the cytoplasm. Functionally, involved in urease metallocenter assembly. Binds nickel. Probably functions as a nickel donor during metallocenter assembly. This is Urease accessory protein UreE from Ruegeria pomeroyi (strain ATCC 700808 / DSM 15171 / DSS-3) (Silicibacter pomeroyi).